A 496-amino-acid chain; its full sequence is Probable fatty acyl-CoA reductase 5 (496 aa).

It belongs to the fatty acyl-CoA reductase family. In terms of tissue distribution, expressed in the endodermal cell layer surrounding the central vasculature in roots. Expressed in floral organs of very young unopened buds and receptacle of siliques.

The catalysed reaction is a long-chain fatty acyl-CoA + 2 NADPH + 2 H(+) = a long-chain primary fatty alcohol + 2 NADP(+) + CoA. In terms of biological role, catalyzes the reduction of fatty acyl-CoA to fatty alcohols. Catalyzes specifically the formation of C18:0 fatty alcohol. Provides the fatty alcohols required for synthesis of suberin in roots, seed coat and wound-induced leaf tissue. Provides the fatty alcohols required for synthesis of alkyl hydroxycinnamates in root waxes. The sequence is that of Probable fatty acyl-CoA reductase 5 from Arabidopsis thaliana (Mouse-ear cress).